A 271-amino-acid polypeptide reads, in one-letter code: Transcription factor PU.1 (271 aa).

Positions 124 to 164 are disordered; it reads LSPAHQQSSDEEEGERQSPPLEVSDGEADGLEPGPGLLHGE. Phosphoserine occurs at positions 141 and 147. Low complexity predominate over residues 154–164; it reads LEPGPGLLHGE. Residues 171–254 constitute a DNA-binding region (ETS); sequence IRLYQFLLDL…VKKKLTYQFS (84 aa). Positions 218, 231, 234, and 244 each coordinate DNA.

It belongs to the ETS family. In terms of assembly, binds DNA as a monomer. Can form homomers. Directly interacts with CEBPD/NF-IL6-beta; this interaction does not affect DNA-binding properties of each partner. Interacts with NONO/p54(nrb). Interacts with RUNX1/AML1. Interacts with GFI1; the interaction represses SPI1 transcriptional activity, hence blocks SPI1-induced macrophage differentiation of myeloid progenitor cells. Interacts with CEBPE. Interacts with IRF4/Pip and IRF8. Interacts with JUN. Interacts with RB1. Interacts with TBP.

The protein localises to the nucleus. With respect to regulation, transcriptional activity at macrophage-specific genes is inhibited by interaction with GFI1, which results in the inhibition of SPI1-induced macrophage differentiation of myeloid progenitor cells, but not that of the granulocyte lineage. Functionally, pioneer transcription factor, which controls hematopoietic cell fate by decompacting stem cell heterochromatin and allowing other transcription factors to enter otherwise inaccessible genomic sites. Once in open chromatin, can directly control gene expression by binding genetic regulatory elements and can also more broadly influence transcription by recruiting transcription factors, such as interferon regulatory factors (IRFs), to otherwise inaccessible genomic regions. Transcriptionally activates genes important for myeloid and lymphoid lineages, such as CSF1R or FCER1A. Transcriptional activation from certain promoters, possibly containing low affinity binding sites, is achieved cooperatively with other transcription factors. FCER1A transactivation is achieved in cooperation with GATA1. May be particularly important for the pro- to pre-B cell transition. Binds (via the ETS domain) onto the purine-rich DNA core sequence 5'-GAGGAA-3', also known as the PU-box. In vitro can bind RNA and interfere with pre-mRNA splicing. The sequence is that of Transcription factor PU.1 (Spi1) from Rattus norvegicus (Rat).